The primary structure comprises 336 residues: Large ribosomal subunit protein mL39 (336 aa).

The TGS domain occupies 60 to 126 (EKIEVKHVGK…TKSCEIKFLT (67 aa)). Lys-123 carries the post-translational modification N6-acetyllysine.

This sequence belongs to the mitochondrion-specific ribosomal protein mL39 family. In terms of assembly, component of the mitochondrial ribosome large subunit (39S) which comprises a 16S rRNA and about 50 distinct proteins.

Its subcellular location is the mitochondrion. This Mus musculus (Mouse) protein is Large ribosomal subunit protein mL39 (Mrpl39).